A 310-amino-acid polypeptide reads, in one-letter code: Olfactory receptor 10G2 (310 aa).

Residues 1-29 (MGKTKNTSLDAVVTDFILLGLSHPPNLRS) lie on the Extracellular side of the membrane. N-linked (GlcNAc...) asparagine glycosylation occurs at Asn-6. A helical membrane pass occupies residues 30–50 (LLFLVFFIIYILTQLGNLLIL). Residues 51–58 (LTMWADPK) lie on the Cytoplasmic side of the membrane. A helical transmembrane segment spans residues 59 to 80 (LCARPMYILLGVLSFLDMWLSS). Over 81 to 104 (VTVPLLILDFTPSIKAIPFGGCVA) the chain is Extracellular. Cysteines 102 and 194 form a disulfide. A helical membrane pass occupies residues 105–125 (QLYFFHFLGSTQCFLYTLMAY). Over 126 to 144 (DRYLAICQPLRYPVLMNGR) the chain is Cytoplasmic. Residues 145–165 (LCTVLVAGAWVAGSMHGSIQA) form a helical membrane-spanning segment. Topologically, residues 166–202 (TLTFRLPYCGPNQVDYFICDIPAVLRLACADTTVNEL) are extracellular. A helical membrane pass occupies residues 203–222 (VTFVDVGVVAASCFMLILLS). At 223-242 (YANIVNAILKIRTTDGRRRA) the chain is on the cytoplasmic side. The helical transmembrane segment at 243-263 (FSTCGSHLIVVTVYYVPCIFI) threads the bilayer. At 264–274 (YLRAGSKDPLD) the chain is on the extracellular side. The chain crosses the membrane as a helical span at residues 275–295 (GAAAVFYTVVTPLLNPLIYTL). Over 296 to 310 (RNQEVKSALKRITAG) the chain is Cytoplasmic.

It belongs to the G-protein coupled receptor 1 family.

Its subcellular location is the cell membrane. Its function is as follows. Odorant receptor. This chain is Olfactory receptor 10G2 (OR10G2), found in Homo sapiens (Human).